A 249-amino-acid chain; its full sequence is MVVIEQKKRFALFLATCDSEFVKKTYGGYFNVFVSTFGEEGEQWDLFRVIDGQFPDENDLDKYDGFVISGSPHDAFGDADWIVKLCEVCQKLDHMKKKVLGICFGHQIITRVKGGKIGRALKGADMGLRSITIAKDNEKLRGYFGDVEVPASLAIIKCHQDEVLELPESATLLASSEVCNVEMFSIGDHFFCIQGHPEYNKEILFEIVDRVLNMKLMEQEFADKAKSTMETAQPDRILWQKLCKNFLKG.

In terms of domain architecture, Glutamine amidotransferase type-1 spans 19–217 (SEFVKKTYGG…VDRVLNMKLM (199 aa)). C103 acts as the Nucleophile in catalysis. Active-site residues include H196 and E198.

The protein belongs to the peptidase C26 family.

The protein localises to the cytoplasm. It localises to the cytosol. It carries out the reaction an S-[(1E)-1-(hydroxyimino)-omega-(methylsulfanyl)alkyl]-L-glutathione + H2O = an S-[(1E)-1-(hydroxyimino)-omega-(methylsulfanyl)alkyl]-L-cysteinylglycine + L-glutamate. The catalysed reaction is (E)-1-(glutathione-S-yl)-2-(1H-indol-3-yl)acetohydroximate + H2O = (E)-1-(glycyl-L-cystein-S-yl)-2-(1H-indol-3-yl)acetohydroximate + L-glutamate. It catalyses the reaction 2-(glutathion-S-yl)-2-(1H-indol-3-yl)acetonitrile + H2O = 2-(glycyl-L-cystein-S-yl)-2-(1H-indol-3-yl)acetonitrile + L-glutamate. The enzyme catalyses (Z)-1-(glutathione-S-yl)-2-phenylacetohydroximate + H2O = (Z)-1-(glycyl-L-cystein-S-yl)-2-phenylacetohydroximate + L-glutamate. The protein operates within secondary metabolite biosynthesis. Functionally, involved in glucosinolate biosynthesis. Hydrolyzes the gamma-glutamyl peptide bond of several glutathione (GSH) conjugates to produce Cys-Gly conjugates related to glucosinolates. The gamma-Glu-Cys-Gly-GSH conjugates are the sulfur-donating molecule in glucosinolate biosynthesis. Can use the GSH conjugate of the camalexin intermediate IAN (GS-IAN) as substrate. Required for the biosynthesis of camalexin, a pathogen-inducible phytoalexin with antibacterial and antifungal properties. In Arabidopsis thaliana (Mouse-ear cress), this protein is Gamma-glutamyl peptidase 3.